A 241-amino-acid chain; its full sequence is Large ribosomal subunit protein uL3 (241 aa).

Disordered stretches follow at residues V139–M166 and A214–A241. The residue at position 151 (Q151) is an N5-methylglutamine. A compositionally biased stretch (low complexity) spans A229–A241.

Part of the 50S ribosomal subunit. Forms a cluster with proteins L14 and L19. In terms of processing, methylated, on either Lys-155 or Lys-158. Post-translationally, methylated by PrmB.

Its function is as follows. One of the primary rRNA binding proteins, it binds directly near the 3'-end of the 23S rRNA, where it nucleates assembly of the 50S subunit. This is Large ribosomal subunit protein uL3 from Rhodopseudomonas palustris (strain ATCC BAA-98 / CGA009).